Here is a 297-residue protein sequence, read N- to C-terminus: Phosphate import ATP-binding protein PstB (297 aa).

One can recognise an ABC transporter domain in the interval 50–292 (MRLRDVEVFY…PEHDLTEAYI (243 aa)). 82 to 89 (GPSGCGKS) is an ATP binding site.

The protein belongs to the ABC transporter superfamily. Phosphate importer (TC 3.A.1.7) family. The complex is composed of two ATP-binding proteins (PstB), two transmembrane proteins (PstC and PstA) and a solute-binding protein (PstS).

It localises to the cell inner membrane. The enzyme catalyses phosphate(out) + ATP + H2O = ADP + 2 phosphate(in) + H(+). Its function is as follows. Part of the ABC transporter complex PstSACB involved in phosphate import. Responsible for energy coupling to the transport system. The chain is Phosphate import ATP-binding protein PstB from Alcanivorax borkumensis (strain ATCC 700651 / DSM 11573 / NCIMB 13689 / SK2).